A 452-amino-acid chain; its full sequence is Protein FAM222A (452 aa).

This sequence belongs to the FAM222 family.

This Homo sapiens (Human) protein is Protein FAM222A (FAM222A).